A 448-amino-acid polypeptide reads, in one-letter code: UDP-glycosyltransferase 79B5 (448 aa).

Residues threonine 261, 320–322, 337–345, and 359–362 contribute to the UDP-alpha-D-glucose site; these read LEQ, HCGFGSMWE, and LADQ.

Belongs to the UDP-glycosyltransferase family.

This chain is UDP-glycosyltransferase 79B5 (UGT79B5), found in Arabidopsis thaliana (Mouse-ear cress).